The chain runs to 129 residues: Large ribosomal subunit protein uL22 (129 aa).

It belongs to the universal ribosomal protein uL22 family. As to quaternary structure, part of the 50S ribosomal subunit.

Its function is as follows. This protein binds specifically to 23S rRNA; its binding is stimulated by other ribosomal proteins, e.g. L4, L17, and L20. It is important during the early stages of 50S assembly. It makes multiple contacts with different domains of the 23S rRNA in the assembled 50S subunit and ribosome. In terms of biological role, the globular domain of the protein is located near the polypeptide exit tunnel on the outside of the subunit, while an extended beta-hairpin is found that lines the wall of the exit tunnel in the center of the 70S ribosome. The protein is Large ribosomal subunit protein uL22 of Onion yellows phytoplasma (strain OY-M).